We begin with the raw amino-acid sequence, 2062 residues long: Ankyrin repeat domain-containing protein 12 (2062 aa).

2 disordered regions span residues M1–K119 and A145–P188. A compositionally biased stretch (polar residues) spans P9–N20. 2 stretches are compositionally biased toward basic and acidic residues: residues P41–S57 and Y100–N117. Polar residues predominate over residues A145–S172. Residue S149 is modified to Phosphoserine. Residues R173 to T187 are compositionally biased toward basic and acidic residues. ANK repeat units follow at residues R184–V213, A217–T246, and D250–A280. Disordered stretches follow at residues K301–D338, K409–T501, I538–Q577, Q609–K683, E727–L788, E812–D1073, K1097–V1227, and E1328–V1350. Residues L306–E318 are compositionally biased toward acidic residues. 2 stretches are compositionally biased toward polar residues: residues A319 to D328 and K437 to M454. Residues Q455–K467 are compositionally biased toward basic and acidic residues. The segment covering Q468–N480 has biased composition (basic residues). Over residues K481–T498 the composition is skewed to basic and acidic residues. S543 carries the post-translational modification Phosphoserine. Residues T565–S575 show a composition bias toward polar residues. Composition is skewed to basic and acidic residues over residues Q609–P631, T639–T649, K658–K683, E727–E784, E812–S969, H977–I1037, K1061–N1072, and K1103–K1157. S630 carries the post-translational modification Phosphoserine. At S861 the chain carries Phosphoserine. Positions S1161–S1189 are enriched in polar residues. The span at S1200 to E1213 shows a compositional bias: low complexity. Residues E1328–P1344 show a composition bias toward polar residues. The residue at position 1401 (S1401) is a Phosphoserine. Disordered stretches follow at residues N1721 to A1744 and L1756 to P1795. The span at N1729 to A1744 shows a compositional bias: polar residues.

Interacts with the PAS region of the p160 coactivators.

It is found in the nucleus. Its function is as follows. May recruit HDACs to the p160 coactivators/nuclear receptor complex to inhibit ligand-dependent transactivation. The protein is Ankyrin repeat domain-containing protein 12 (ANKRD12) of Homo sapiens (Human).